Consider the following 383-residue polypeptide: NIPA-like protein 2 (383 aa).

N-linked (GlcNAc...) asparagine glycosylation is found at Asn-23 and Asn-33. The next 9 membrane-spanning stretches (helical) occupy residues 46–66 (IHLFGVLLAILGNLVISISLN), 88–108 (VLWLSGVLLTALGETGNFAAY), 115–135 (LIAPLGCMSVTGSAIISVLFL), 144–164 (LLGMTLAFAGTYLLVNFAPNI), 177–197 (FVGWQFLVYVILEILVFCILL), 208–228 (IVVLLTLVALLASLTVISVKA), 243–263 (LTYAIFYIMLVIMIASCVFQV), 278–298 (VVPVNHVFFTTSAIIAGIIFY), and 306–326 (FLTVFIYLFGCFLSFLGVFLV). The interval 352 to 383 (DKVQPDSNGLSYGTLPDGGDSTRGQCGEKKES) is disordered.

This sequence belongs to the NIPA family.

The protein resides in the membrane. The chain is NIPA-like protein 2 (Nipal2) from Mus musculus (Mouse).